A 367-amino-acid polypeptide reads, in one-letter code: GDSL esterase/lipase 3 (367 aa).

An N-terminal signal peptide occupies residues 1 to 23 (MVRLVLIIFFVYTIILSIGSINC). The active-site Nucleophile is Ser-42. N-linked (GlcNAc...) asparagine glycosylation is found at Asn-175, Asn-194, and Asn-321. Residues Asp-329 and His-332 contribute to the active site. Asn-351 is a glycosylation site (N-linked (GlcNAc...) asparagine).

This sequence belongs to the 'GDSL' lipolytic enzyme family.

Its subcellular location is the secreted. This is GDSL esterase/lipase 3 (GLIP3) from Arabidopsis thaliana (Mouse-ear cress).